We begin with the raw amino-acid sequence, 518 residues long: Arrestin-related trafficking adapter 10 (518 aa).

A Glycyl lysine isopeptide (Lys-Gly) (interchain with G-Cter in ubiquitin) cross-link involves residue K118.

It belongs to the ART10 family. As to quaternary structure, interacts with RSP5. In terms of processing, ubiquitinated by RSP5.

The protein resides in the cytoplasm. In terms of biological role, may regulate endocytosis by recruiting RSP5 ubiquitin ligase activity to specific plasma membrane proteins in response to extracellular stimuli. The chain is Arrestin-related trafficking adapter 10 (ART10) from Saccharomyces cerevisiae (strain Lalvin EC1118 / Prise de mousse) (Baker's yeast).